The sequence spans 234 residues: Glucosamine-6-phosphate deaminase (234 aa).

D63 acts as the Proton acceptor; for enolization step in catalysis. N129 acts as the For ring-opening step in catalysis. H131 acts as the Proton acceptor; for ring-opening step in catalysis. The active-site For ring-opening step is the E136.

It belongs to the glucosamine/galactosamine-6-phosphate isomerase family. NagB subfamily.

The catalysed reaction is alpha-D-glucosamine 6-phosphate + H2O = beta-D-fructose 6-phosphate + NH4(+). It functions in the pathway amino-sugar metabolism; N-acetylneuraminate degradation; D-fructose 6-phosphate from N-acetylneuraminate: step 5/5. Its function is as follows. Catalyzes the reversible isomerization-deamination of glucosamine 6-phosphate (GlcN6P) to form fructose 6-phosphate (Fru6P) and ammonium ion. The chain is Glucosamine-6-phosphate deaminase from Listeria welshimeri serovar 6b (strain ATCC 35897 / DSM 20650 / CCUG 15529 / CIP 8149 / NCTC 11857 / SLCC 5334 / V8).